The primary structure comprises 179 residues: Ribulose bisphosphate carboxylase small subunit, chloroplastic 3 (179 aa).

A chloroplast-targeting transit peptide spans 1 to 58 (MASSATMLSSVATAARAAPAQASMVAPFVGLKSASAFPVTQKPATGLSTLPSNGGRVQ).

It belongs to the RuBisCO small chain family. In terms of assembly, heterohexadecamer of 8 large and 8 small subunits.

Its subcellular location is the plastid. The protein localises to the chloroplast. Its function is as follows. RuBisCO catalyzes two reactions: the carboxylation of D-ribulose 1,5-bisphosphate, the primary event in carbon dioxide fixation, as well as the oxidative fragmentation of the pentose substrate. Both reactions occur simultaneously and in competition at the same active site. Although the small subunit is not catalytic it is essential for maximal activity. This chain is Ribulose bisphosphate carboxylase small subunit, chloroplastic 3, found in Fritillaria agrestis (Stinkbells).